The chain runs to 79 residues: D-alanyl carrier protein (79 aa).

The region spanning 1 to 77 (MDIKSEVIEI…KIIAGIVELQ (77 aa)) is the Carrier domain. O-(pantetheine 4'-phosphoryl)serine is present on serine 35.

This sequence belongs to the DltC family. In terms of processing, 4'-phosphopantetheine is transferred from CoA to a specific serine of apo-DCP.

The protein localises to the cytoplasm. The protein operates within cell wall biogenesis; lipoteichoic acid biosynthesis. Functionally, carrier protein involved in the D-alanylation of lipoteichoic acid (LTA). The loading of thioester-linked D-alanine onto DltC is catalyzed by D-alanine--D-alanyl carrier protein ligase DltA. The DltC-carried D-alanyl group is further transferred to cell membrane phosphatidylglycerol (PG) by forming an ester bond, probably catalyzed by DltD. D-alanylation of LTA plays an important role in modulating the properties of the cell wall in Gram-positive bacteria, influencing the net charge of the cell wall. In Streptococcus pneumoniae serotype 2 (strain D39 / NCTC 7466), this protein is D-alanyl carrier protein.